The primary structure comprises 301 residues: Tetratricopeptide repeat domain-containing protein PYG7, chloroplastic (301 aa).

The transit peptide at 1–61 directs the protein to the chloroplast; the sequence is MFESNMVLQT…FHDYVFAEIS (61 aa). Helical transmembrane passes span 82 to 102 and 121 to 141; these read TFLLGQSLLMVSAHPQLAAAA and IQLSYLLLLLGLLGVGTFYVI. 3 TPR repeats span residues 168 to 201, 206 to 239, and 240 to 273; these read ATELFELGAVMLRRKFYPAANKFLQQAIQKWDGD, AQVYNALGVSYVREDKLDKGIAQFEMAVKLQPGY, and VTAWNNLGDAYEKKKELPLALNAFEEVLLFDPNN.

As to quaternary structure, interacts with PSA3.

It localises to the plastid. Its subcellular location is the chloroplast thylakoid membrane. In terms of biological role, nuclear genome-encoded factor required for the accumulation of photosystem I (PSI). Functions as a PSI biogenesis factor. Cooperates with PSA3 to promote the stable assembly of PSI in the thylakoid membrane. May target primarily the PsaC subunit. This Arabidopsis thaliana (Mouse-ear cress) protein is Tetratricopeptide repeat domain-containing protein PYG7, chloroplastic.